The sequence spans 700 residues: Polyribonucleotide nucleotidyltransferase (700 aa).

Residues D485 and D491 each contribute to the Mg(2+) site. The 60-residue stretch at 552–611 (PRITVIKINPEKIRDVIGKGGAVIRALTEETGTTIELEDDGTVKIASSNGEATKEAIRRI) folds into the KH domain. The S1 motif domain maps to 621–689 (GRIYNGKVIR…RQGRVRLSIK (69 aa)).

It belongs to the polyribonucleotide nucleotidyltransferase family. In terms of assembly, component of the RNA degradosome, which is a multiprotein complex involved in RNA processing and mRNA degradation. Mg(2+) is required as a cofactor.

The protein localises to the cytoplasm. The enzyme catalyses RNA(n+1) + phosphate = RNA(n) + a ribonucleoside 5'-diphosphate. In terms of biological role, involved in mRNA degradation. Catalyzes the phosphorolysis of single-stranded polyribonucleotides processively in the 3'- to 5'-direction. This Shewanella baltica (strain OS155 / ATCC BAA-1091) protein is Polyribonucleotide nucleotidyltransferase.